Consider the following 189-residue polypeptide: Small ribosomal subunit protein uS7 (189 aa).

Belongs to the universal ribosomal protein uS7 family. Part of the 30S ribosomal subunit.

In terms of biological role, one of the primary rRNA binding proteins, it binds directly to 16S rRNA where it nucleates assembly of the head domain of the 30S subunit. Is located at the subunit interface close to the decoding center. The sequence is that of Small ribosomal subunit protein uS7 from Methanosarcina mazei (strain ATCC BAA-159 / DSM 3647 / Goe1 / Go1 / JCM 11833 / OCM 88) (Methanosarcina frisia).